We begin with the raw amino-acid sequence, 743 residues long: MSADSPSSPASSQAAEVQVRLPDGSLKTQPADATAMDVAKEISEGLARSVVAAEVDGTIVDSFRPLGEIADDENVVPLRLLTTRDESALDVLRHSAAHVMARAIMRIYKGVSLAFGPTTSGGFYYDFDMPEKISEDDFPKIEAEIKKIIKAKEPFERFVLERDEARKLCDDLDQDLKVEHIETGLGDQATVSFYRQGEFVDLCRGPHIPHAGMIKAIKLLSVAGAYWKGDASGRQLQRVYGTAFFDKKELASYLEQIEEAKRRDHRVLGKQHGLFAINPEVGQGLCLWLPKGARVRVTLEDFLRRELLSRGYDPVYSPHIGRVEMYETSGHFPYYRDSQFAPLFGSEVGGLLDAWSTRLDKDDLSKDDEDKLIAAAEVFGVKLPDYKPSASNDAKKDVLHRWQLNHERYLLKPMNCPHHCQIFGAQPRSYRQLPLRLFEFGTVYRHEQTGELNGMMRVRGLTQDDAHIFCTADQVEEEFRATIELTKFVLESVGLDDYRVQLSLRDPDSSKYVGSEENWDHAEGALRGVLEQSGLSFNEEPGEAAFYGPKADFMVRDCIGRSWQLGTVQLDYNLPERFKLEYKGNDNATHRPVMIHRAPFGSLERFTGMLIEHFAGAFPMWLSPEQIRVLPLSDKSVEYATAVAKQLDEAGFKVTVDASDGKVQAKIRNAQIDLVNYMAVVGPKEAESGQVALRDRIEGDLGSMPIKEAIARLQKEVETRQVRQAVKGSTVSIAETGGAATDY.

The segment covering 1–15 has biased composition (low complexity); that stretch reads MSADSPSSPASSQAA. The segment at 1 to 30 is disordered; it reads MSADSPSSPASSQAAEVQVRLPDGSLKTQP. A TGS domain is found at 13–76; it reads QAAEVQVRLP…GEIADDENVV (64 aa). The tract at residues 264 to 619 is catalytic; it reads DHRVLGKQHG…LIEHFAGAFP (356 aa). Residues 354–404 form an insert region; sequence AWSTRLDKDDLSKDDEDKLIAAAEVFGVKLPDYKPSASNDAKKDVLHRWQL. Zn(2+) contacts are provided by cysteine 416, histidine 467, and histidine 596.

It belongs to the class-II aminoacyl-tRNA synthetase family. Homodimer. Zn(2+) serves as cofactor.

It localises to the cytoplasm. The enzyme catalyses tRNA(Thr) + L-threonine + ATP = L-threonyl-tRNA(Thr) + AMP + diphosphate + H(+). In terms of biological role, catalyzes the attachment of threonine to tRNA(Thr) in a two-step reaction: L-threonine is first activated by ATP to form Thr-AMP and then transferred to the acceptor end of tRNA(Thr). Also edits incorrectly charged L-seryl-tRNA(Thr). The chain is Threonine--tRNA ligase from Rhodopirellula baltica (strain DSM 10527 / NCIMB 13988 / SH1).